Consider the following 173-residue polypeptide: Protein-export protein SecB (173 aa).

It belongs to the SecB family. Homotetramer, a dimer of dimers. One homotetramer interacts with 1 SecA dimer.

The protein resides in the cytoplasm. Functionally, one of the proteins required for the normal export of preproteins out of the cell cytoplasm. It is a molecular chaperone that binds to a subset of precursor proteins, maintaining them in a translocation-competent state. It also specifically binds to its receptor SecA. The sequence is that of Protein-export protein SecB from Ralstonia nicotianae (strain ATCC BAA-1114 / GMI1000) (Ralstonia solanacearum).